Here is a 306-residue protein sequence, read N- to C-terminus: MTRKIRCALIGPGNIGTDLLAKLMRSPVLEPVWMVGIDPDSDGLKRARELGLKTTAEGVDGLLPHVQADAVQIAFDATSAYVHAENSRKLNALGVLMIDLTPAAIGPYCVPPVNLMDHIGSGEMNVNMVTCGGQATIPMVRAVSRVQPVAYGEIVATVSSRSVGPGTRKNIDEFTRTTAAAVAQVGGAKDGKAIIVINPADPPLIMRDTVHCLTETAPDEARIVESVHAMIADVQRYVPGYRLVNGPVFDGNRVSIYLEVEGLGDYLPKYAGNLDIMTAAAARTAEMFAEELLAGRLALQPAAQAA.

C131 serves as the catalytic Acyl-thioester intermediate. NAD(+)-binding positions include 162-170 (SVGPGTRKN) and N273.

This sequence belongs to the acetaldehyde dehydrogenase family.

The enzyme catalyses acetaldehyde + NAD(+) + CoA = acetyl-CoA + NADH + H(+). In Burkholderia lata (strain ATCC 17760 / DSM 23089 / LMG 22485 / NCIMB 9086 / R18194 / 383), this protein is Acetaldehyde dehydrogenase 3.